Here is a 173-residue protein sequence, read N- to C-terminus: Alpha-crystallin A chain (173 aa).

N-acetylmethionine is present on Met1. The required for complex formation with BFSP1 and BFSP2 stretch occupies residues 1–63 (MDIAIQHPWF…RSVLDSGVSE (63 aa)). Gln6 is modified (deamidated glutamine; partial). At Ser45 the chain carries Phosphoserine. A Deamidated glutamine; partial modification is found at Gln50. Positions 52 to 162 (LFRSVLDSGV…GHSERAIPVS (111 aa)) constitute a sHSP domain. Position 70 is an N6-acetyllysine (Lys70). Gln90 is subject to Deamidated glutamine; partial. N6-acetyllysine is present on Lys99. His100 contacts Zn(2+). Asn101 carries the post-translational modification Deamidated asparagine; partial. Positions 102 and 107 each coordinate Zn(2+). Ser122 is subject to Phosphoserine. Asn123 is subject to Deamidated asparagine; partial. A disordered region spans residues 144-173 (PKIPSGMDAGHSERAIPVSREEKPSSAPSS). Positions 153-167 (GHSERAIPVSREEKP) are enriched in basic and acidic residues. His154 serves as a coordination point for Zn(2+). A glycan (O-linked (GlcNAc) serine) is linked at Ser162.

The protein belongs to the small heat shock protein (HSP20) family. As to quaternary structure, heteromer composed of three CRYAA and one CRYAB subunits. Inter-subunit bridging via zinc ions enhances stability, which is crucial as there is no protein turn over in the lens. Can also form homodimers and homotetramers (dimers of dimers) which serve as the building blocks of homooligomers. Within homooligomers, the zinc-binding motif is created from residues of 3 different molecules. His-100 and Glu-102 from one molecule are ligands of the zinc ion, and His-107 and His-154 residues from additional molecules complete the site with tetrahedral coordination geometry. Part of a complex required for lens intermediate filament formation composed of BFSP1, BFSP2 and CRYAA. Post-translationally, acetylation at Lys-70 may increase chaperone activity. Undergoes age-dependent proteolytical cleavage at the C-terminus.

It localises to the cytoplasm. Its subcellular location is the nucleus. Contributes to the transparency and refractive index of the lens. Acts as a chaperone, preventing aggregation of various proteins under a wide range of stress conditions. Required for the correct formation of lens intermediate filaments as part of a complex composed of BFSP1, BFSP2 and CRYAA. The protein is Alpha-crystallin A chain (CRYAA) of Ceratotherium simum (White rhinoceros).